Consider the following 53-residue polypeptide: Rubredoxin (53 aa).

The 52-residue stretch at 1 to 52 folds into the Rubredoxin-like domain; it reads MAKWRCKICGYIYDEDEGDPDNGISPGTKFEDLPDDWVCPLCGAPKSEFERI. Fe cation is bound by residues Cys6, Cys9, Cys39, and Cys42.

The protein belongs to the rubredoxin family. Fe(3+) serves as cofactor.

Its function is as follows. Rubredoxin is a small nonheme, iron protein lacking acid-labile sulfide. Its single Fe, chelated to 4 Cys, functions as an electron acceptor and may also stabilize the conformation of the molecule. This Pyrococcus abyssi (strain GE5 / Orsay) protein is Rubredoxin (rub).